The primary structure comprises 173 residues: MFSHIIVGAAHGSTLYVGDMLFYAILFIVLMALIAKFAWGPVNAMLKERADRISNDIDSAEQSRIEAEKLAKQRKEALDNSHAEATSIINNAKDSGAKERELIIGNAQNEAKSLKDKAKQDIEQERADALKSAQDDIASLSIEIASKVIKKELDENSQKDLIDSYIEGLGDSK.

A helical transmembrane segment spans residues 15 to 35 (LYVGDMLFYAILFIVLMALIA).

This sequence belongs to the ATPase B chain family. As to quaternary structure, F-type ATPases have 2 components, F(1) - the catalytic core - and F(0) - the membrane proton channel. F(1) has five subunits: alpha(3), beta(3), gamma(1), delta(1), epsilon(1). F(0) has three main subunits: a(1), b(2) and c(10-14). The alpha and beta chains form an alternating ring which encloses part of the gamma chain. F(1) is attached to F(0) by a central stalk formed by the gamma and epsilon chains, while a peripheral stalk is formed by the delta and b chains.

The protein localises to the cell membrane. In terms of biological role, f(1)F(0) ATP synthase produces ATP from ADP in the presence of a proton or sodium gradient. F-type ATPases consist of two structural domains, F(1) containing the extramembraneous catalytic core and F(0) containing the membrane proton channel, linked together by a central stalk and a peripheral stalk. During catalysis, ATP synthesis in the catalytic domain of F(1) is coupled via a rotary mechanism of the central stalk subunits to proton translocation. Component of the F(0) channel, it forms part of the peripheral stalk, linking F(1) to F(0). The polypeptide is ATP synthase subunit b (Pediococcus pentosaceus (strain ATCC 25745 / CCUG 21536 / LMG 10740 / 183-1w)).